We begin with the raw amino-acid sequence, 431 residues long: UDP-N-acetylmuramate--L-alanine ligase (431 aa).

108-114 contacts ATP; sequence GAHGKST.

Belongs to the MurCDEF family.

The protein resides in the cytoplasm. The enzyme catalyses UDP-N-acetyl-alpha-D-muramate + L-alanine + ATP = UDP-N-acetyl-alpha-D-muramoyl-L-alanine + ADP + phosphate + H(+). The protein operates within cell wall biogenesis; peptidoglycan biosynthesis. Cell wall formation. This chain is UDP-N-acetylmuramate--L-alanine ligase, found in Campylobacter jejuni subsp. doylei (strain ATCC BAA-1458 / RM4099 / 269.97).